A 397-amino-acid chain; its full sequence is Enoyl-[acyl-carrier-protein] reductase [NADH] (397 aa).

Residues 48–53, 74–75, 111–112, and 139–140 each bind NAD(+); these read GASTGY, FE, DA, and LA. Tyrosine 224 provides a ligand contact to substrate. Tyrosine 234 acts as the Proton donor in catalysis. NAD(+) contacts are provided by residues lysine 243 and 272 to 274; that span reads VVT.

Belongs to the TER reductase family. As to quaternary structure, monomer.

The enzyme catalyses a 2,3-saturated acyl-[ACP] + NAD(+) = a (2E)-enoyl-[ACP] + NADH + H(+). It participates in lipid metabolism; fatty acid biosynthesis. Functionally, involved in the final reduction of the elongation cycle of fatty acid synthesis (FAS II). Catalyzes the reduction of a carbon-carbon double bond in an enoyl moiety that is covalently linked to an acyl carrier protein (ACP). This is Enoyl-[acyl-carrier-protein] reductase [NADH] from Pseudomonas fluorescens (strain SBW25).